We begin with the raw amino-acid sequence, 701 residues long: Elongation factor G (701 aa).

Positions 10-290 (AKVRNIGIMA…AVVDYLPSPL (281 aa)) constitute a tr-type G domain. GTP-binding positions include 19-26 (AHIDAGKT), 83-87 (DTPGH), and 137-140 (NKMD).

Belongs to the TRAFAC class translation factor GTPase superfamily. Classic translation factor GTPase family. EF-G/EF-2 subfamily.

It localises to the cytoplasm. Catalyzes the GTP-dependent ribosomal translocation step during translation elongation. During this step, the ribosome changes from the pre-translocational (PRE) to the post-translocational (POST) state as the newly formed A-site-bound peptidyl-tRNA and P-site-bound deacylated tRNA move to the P and E sites, respectively. Catalyzes the coordinated movement of the two tRNA molecules, the mRNA and conformational changes in the ribosome. The chain is Elongation factor G from Tropheryma whipplei (strain TW08/27) (Whipple's bacillus).